We begin with the raw amino-acid sequence, 610 residues long: Zinc metalloproteinase-disintegrin-like halysase (610 aa).

Positions 1–20 (MIQVLLVTICLAVFPYQGSS) are cleaved as a signal peptide. Residues 21–182 (IILESGNVND…WESYEPIKKA (162 aa)) constitute a propeptide that is removed on maturation. Residues 199–395 (KYVKLVMVAD…DMPQCILKKP (197 aa)) enclose the Peptidase M12B domain. Asn218 carries N-linked (GlcNAc...) asparagine glycosylation. 3 disulfide bridges follow: Cys310-Cys390, Cys350-Cys374, and Cys352-Cys357. Residue His335 coordinates Zn(2+). Glu336 is an active-site residue. 2 residues coordinate Zn(2+): His339 and His345. The Disintegrin domain maps to 403-488 (PPVCGNYFVE…AECTDRFQRN (86 aa)). Positions 405, 408, 410, 412, 415, and 418 each coordinate Ca(2+). Intrachain disulfides connect Cys406–Cys435, Cys417–Cys430, Cys419–Cys425, Cys429–Cys452, Cys443–Cys449, Cys448–Cys474, Cys461–Cys481, Cys468–Cys499, Cys492–Cys504, Cys511–Cys561, Cys526–Cys572, Cys539–Cys549, Cys556–Cys598, and Cys592–Cys603. Positions 467–469 (ECD) match the D/ECD-tripeptide motif.

It belongs to the venom metalloproteinase (M12B) family. P-III subfamily. P-IIIa sub-subfamily. As to quaternary structure, monomer. Zn(2+) serves as cofactor. Expressed by the venom gland.

The protein resides in the secreted. Its activity is regulated as follows. Inhibited by EDTA and EGTA. Not inhibited by PMSF, antipain, pepstatin, and iodoacetamide. Its function is as follows. Strongly inhibits the collagen-induced human platelet aggregation (inhibition of alpha-2/beta-1 (ITGA2/ITGB1) integrin). Hydrolyzes the Aalpha-chain of fibrinogen, without cleavage of Bbeta- and gamma-chains. Degrades type IV collagen (but not types I, II and V), fibronectin and vitronectin and also integrins alpha-1/beta-1 (ITGA1/ITGB1) and alpha-5/beta/1 (ITGA5/ITGB1) (but not alpha-V/beta-3 (ITGAV/ITGB3) and alpha-V/beta-5 (ITGAV/ITGB5) integrins). Both metalloproteinase (peptidase M12B) and disintegrin-like domains (recombinantly expressed and named halydin) play characteristic roles to inhibit human platelet aggregation. Induces apoptosis and strongly inhibits proliferation of endothelial cells as well as adhesion of the cells to extracellular matrix proteins. The apoptosis is closely associated with activation of caspase-3 and decreased level of Bcl-X(L)/Bax. Apohalysase, which lacks metalloprotease activity, is also able to induce the apoptosis. Cleaves insulin B chain at '34-His-|-Leu-35', '37-Glu-|-Ala-38', '38-Ala-|-Leu-39', '39-Leu-|-Tyr-40', '40-Tyr-|-Leu-41', '47-Gly-|-Phe-48' and '48-Phe-|-Phe-49' bonds. The sequence is that of Zinc metalloproteinase-disintegrin-like halysase from Gloydius halys (Chinese water mocassin).